Here is a 70-residue protein sequence, read N- to C-terminus: Large ribosomal subunit protein bL31 (70 aa).

The Zn(2+) site is built by cysteine 16, cysteine 18, cysteine 37, and cysteine 40.

It belongs to the bacterial ribosomal protein bL31 family. Type A subfamily. In terms of assembly, part of the 50S ribosomal subunit. Zn(2+) is required as a cofactor.

Its function is as follows. Binds the 23S rRNA. This chain is Large ribosomal subunit protein bL31, found in Saccharophagus degradans (strain 2-40 / ATCC 43961 / DSM 17024).